Consider the following 218-residue polypeptide: Small ribosomal subunit protein uS3 (218 aa).

Residues 39–107 (IRDYIKSKLL…QISINIVEIK (69 aa)) form the KH type-2 domain.

This sequence belongs to the universal ribosomal protein uS3 family. In terms of assembly, part of the 30S ribosomal subunit. Forms a tight complex with proteins S10 and S14.

Binds the lower part of the 30S subunit head. Binds mRNA in the 70S ribosome, positioning it for translation. The protein is Small ribosomal subunit protein uS3 of Desulforudis audaxviator (strain MP104C).